The primary structure comprises 302 residues: Zinc finger protein-like 1 homolog (302 aa).

A B box-type; degenerate zinc finger spans residues 1 to 43 (MGLCKCPKRLVTNQFCFEHRVNVCEHCMVQSHPKCIVQSYLQW). The RING-type; atypical zinc finger occupies 53–101 (CNLCGTSLEQGECVRLVCYHVFHWDCLNARQAALPANTAPRGHQCPGCS). The interval 168 to 233 (IHSGGERERG…RDDNKYQRRT (66 aa)) is disordered. The segment covering 198–208 (PPSSGDFNASS) has biased composition (polar residues). S217 is modified (phosphoserine). The chain crosses the membrane as a helical span at residues 258–278 (WFLVLSGILAFVMFIYLLAWM).

The protein belongs to the ZFPL1 family.

Its subcellular location is the membrane. This is Zinc finger protein-like 1 homolog from Drosophila pseudoobscura pseudoobscura (Fruit fly).